The chain runs to 230 residues: 5'-methylthioadenosine/S-adenosylhomocysteine nucleosidase (230 aa).

Glutamate 12 functions as the Proton acceptor in the catalytic mechanism. Substrate-binding positions include glycine 78, methionine 153, and 174 to 175; that span reads ME. Aspartate 198 functions as the Proton donor in the catalytic mechanism.

It belongs to the PNP/UDP phosphorylase family. MtnN subfamily.

The enzyme catalyses S-adenosyl-L-homocysteine + H2O = S-(5-deoxy-D-ribos-5-yl)-L-homocysteine + adenine. It catalyses the reaction S-methyl-5'-thioadenosine + H2O = 5-(methylsulfanyl)-D-ribose + adenine. It carries out the reaction 5'-deoxyadenosine + H2O = 5-deoxy-D-ribose + adenine. It participates in amino-acid biosynthesis; L-methionine biosynthesis via salvage pathway; S-methyl-5-thio-alpha-D-ribose 1-phosphate from S-methyl-5'-thioadenosine (hydrolase route): step 1/2. Its function is as follows. Catalyzes the irreversible cleavage of the glycosidic bond in both 5'-methylthioadenosine (MTA) and S-adenosylhomocysteine (SAH/AdoHcy) to adenine and the corresponding thioribose, 5'-methylthioribose and S-ribosylhomocysteine, respectively. Also cleaves 5'-deoxyadenosine, a toxic by-product of radical S-adenosylmethionine (SAM) enzymes, into 5-deoxyribose and adenine. This Aeromonas salmonicida (strain A449) protein is 5'-methylthioadenosine/S-adenosylhomocysteine nucleosidase.